A 483-amino-acid polypeptide reads, in one-letter code: FAD-linked oxidoreductase pgmH (483 aa).

The FAD-binding PCMH-type domain occupies 54–215; the sequence is SIRLATLVVY…TEFKYRVHKQ (162 aa).

This sequence belongs to the oxygen-dependent FAD-linked oxidoreductase family. FAD is required as a cofactor.

It functions in the pathway pigment biosynthesis. It participates in secondary metabolite biosynthesis. FAD-linked oxidoreductase; part of the gene cluster that mediates the biosynthesis of pleosporalin A, ascomycone A, as well as a third cryptic naphthoquinone derived pigment, all responsible for the coloration of conidia. Essential for the production of pleosporalin A, but not the 2 other final products. The pathway begins with the biosynthesis of the cyclized heptaketide 3-acetonyl-1,6,8-trihydroxy-2-naphthaldehyde by the NR-PKS pgmA. The C-6 hydroxyl group is further methylated by the O-methyltransferase pgmB to yield fusarubinaldehyde which is in turn oxidized by the cytochrome P450 monooxygenase pgmC at C-9. The C-1 hydroxyl group is then methylated spontaneously. Although pgmE, pgmD and pgmH are essential for the production of pleosporalin A, it is not the case for the 2 other final products and it remains difficult to assign a specific function to each enzyme. PgmF and pgmG seem not to be involved in pigment biosynthesis although they were regulated by the cluster-specific transcription factor pgmR. The protein is FAD-linked oxidoreductase pgmH of Aspergillus terreus (strain NIH 2624 / FGSC A1156).